Consider the following 875-residue polypeptide: Probable ubiquitin carboxyl-terminal hydrolase 7 (875 aa).

Residues 54-167 (KECSHLKKGV…RDVQQFICSN (114 aa)) form a UBP-type zinc finger. Zn(2+) is bound by residues Cys56, His58, Cys83, Cys86, Cys101, Cys104, Cys109, His116, His120, His127, Cys140, and Cys143. The region spanning 208-875 (PGLKNLGATC…EAYMLFYERV (668 aa)) is the USP domain. Catalysis depends on Cys217, which acts as the Nucleophile. Residues Ser333 and Ser337 each carry the phosphoserine modification. The tract at residues 396–486 (YSKELSQSSD…ASPKKEVLKS (91 aa)) is disordered. A compositionally biased stretch (low complexity) spans 401 to 438 (SQSSDSSQHQHDSFLPANSSPLAASSTKSLPSSELLDS). A compositionally biased stretch (basic and acidic residues) spans 473–484 (NHEEASPKKEVL). Phosphoserine occurs at positions 486 and 493. Positions 575–586 (RSRFSRSPKKSS) are enriched in basic residues. Positions 575-628 (RSRFSRSPKKSSVKIVVDNANDDTDQAPTTNSSSLNENLLGGHASENDKSLKQS) are disordered. Residues 600-611 (QAPTTNSSSLNE) show a composition bias toward polar residues. A Phosphoserine modification is found at Ser645. Catalysis depends on His812, which acts as the Proton acceptor.

It belongs to the peptidase C19 family.

It carries out the reaction Thiol-dependent hydrolysis of ester, thioester, amide, peptide and isopeptide bonds formed by the C-terminal Gly of ubiquitin (a 76-residue protein attached to proteins as an intracellular targeting signal).. The protein is Probable ubiquitin carboxyl-terminal hydrolase 7 (ubp7) of Schizosaccharomyces pombe (strain 972 / ATCC 24843) (Fission yeast).